The following is a 715-amino-acid chain: DNA ligase (715 aa).

NAD(+) is bound by residues 47–51, 96–97, and Glu-128; these read DADYD and SL. Lys-130 acts as the N6-AMP-lysine intermediate in catalysis. 4 residues coordinate NAD(+): Arg-151, Glu-188, Lys-306, and Lys-330. Positions 435, 438, 453, and 459 each coordinate Zn(2+). A BRCT domain is found at 637–715; the sequence is RRDTAVAGKT…EDEWLALIGN (79 aa).

It belongs to the NAD-dependent DNA ligase family. LigA subfamily. The cofactor is Mg(2+). Requires Mn(2+) as cofactor.

The enzyme catalyses NAD(+) + (deoxyribonucleotide)n-3'-hydroxyl + 5'-phospho-(deoxyribonucleotide)m = (deoxyribonucleotide)n+m + AMP + beta-nicotinamide D-nucleotide.. Functionally, DNA ligase that catalyzes the formation of phosphodiester linkages between 5'-phosphoryl and 3'-hydroxyl groups in double-stranded DNA using NAD as a coenzyme and as the energy source for the reaction. It is essential for DNA replication and repair of damaged DNA. The protein is DNA ligase of Rhodopseudomonas palustris (strain TIE-1).